We begin with the raw amino-acid sequence, 701 residues long: DNA-directed RNA polymerase subunit beta' (701 aa).

Residues Cys-76, Cys-78, Cys-94, and Cys-97 each contribute to the Zn(2+) site. Residues Asp-511, Asp-513, and Asp-515 each coordinate Mg(2+).

Belongs to the RNA polymerase beta' chain family. RpoC1 subfamily. In terms of assembly, in plastids the minimal PEP RNA polymerase catalytic core is composed of four subunits: alpha, beta, beta', and beta''. When a (nuclear-encoded) sigma factor is associated with the core the holoenzyme is formed, which can initiate transcription. Mg(2+) serves as cofactor. Zn(2+) is required as a cofactor.

The protein localises to the plastid. It localises to the chloroplast. It catalyses the reaction RNA(n) + a ribonucleoside 5'-triphosphate = RNA(n+1) + diphosphate. DNA-dependent RNA polymerase catalyzes the transcription of DNA into RNA using the four ribonucleoside triphosphates as substrates. The protein is DNA-directed RNA polymerase subunit beta' of Pelargonium hortorum (Common geranium).